Consider the following 336-residue polypeptide: MCINPADEQDYESYSLRMTAHLIESSSVTSFTATRLNQTTFRLVEDDRHIERPMVYVKLYATCVVVIDTGCNSPRNTELPVTSLRRFIETVPLDQNESMPLNPDGRLPYYILLSHCHYDHIGGLESFQGSPYHIYCSQRLSETIANSRLHHDSLRESCSLPPLELDLEKMTGVPDGYSLVDANSVELNLQLLHAPGHSPDHMVVLDLDESTIFLGDSAYEQSPLFYAYGGDLTLHIQTLARLETLLTTYETCEGAPIWTAACGHFSSGLNAVSLLQRTKTFILDVIEGKVPSRSQEANPYQSGGVLEFFTRDELAMACPDHLLKDARGSSISLCSS.

The segment at residues 32–100 (TATRLNQTTF…VPLDQNESMP (69 aa)) is a DNA-binding region (WRKY).

Its subcellular location is the nucleus. It functions in the pathway secondary metabolite biosynthesis. Putative transcription factor; part of the cluster that mediates the biosynthesis of a highly modified cyclo-arginine-tryptophan dipeptide (cRW). This is Putative transcription factor avaE from Aspergillus versicolor.